A 93-amino-acid chain; its full sequence is Small ribosomal subunit protein uS19c (93 aa).

This sequence belongs to the universal ribosomal protein uS19 family.

The protein localises to the plastid. It localises to the chloroplast. In terms of biological role, protein S19 forms a complex with S13 that binds strongly to the 16S ribosomal RNA. This is Small ribosomal subunit protein uS19c from Tetradesmus obliquus (Green alga).